The primary structure comprises 195 residues: Thymidine kinase (195 aa).

ATP-binding positions include 15-22 and 88-91; these read GSMFSGKS and DEVQ. The Proton acceptor role is filled by E89. 4 residues coordinate Zn(2+): C145, C148, C183, and C186.

This sequence belongs to the thymidine kinase family. Homotetramer.

Its subcellular location is the cytoplasm. It carries out the reaction thymidine + ATP = dTMP + ADP + H(+). This chain is Thymidine kinase, found in Bacillus cereus (strain AH187).